The chain runs to 142 residues: Large ribosomal subunit protein uL11 (142 aa).

This sequence belongs to the universal ribosomal protein uL11 family. Part of the ribosomal stalk of the 50S ribosomal subunit. Interacts with L10 and the large rRNA to form the base of the stalk. L10 forms an elongated spine to which L12 dimers bind in a sequential fashion forming a multimeric L10(L12)X complex. One or more lysine residues are methylated.

In terms of biological role, forms part of the ribosomal stalk which helps the ribosome interact with GTP-bound translation factors. The polypeptide is Large ribosomal subunit protein uL11 (Bartonella bacilliformis (strain ATCC 35685 / KC583 / Herrer 020/F12,63)).